The chain runs to 852 residues: GPI ethanolamine phosphate transferase 2 (852 aa).

Asparagine 191 and asparagine 420 each carry an N-linked (GlcNAc...) asparagine glycan. 3 helical membrane-spanning segments follow: residues 458–478 (LIRL…TFFP), 486–506 (FAPA…MMFA), and 516–536 (FWYW…AGHF). A glycan (N-linked (GlcNAc...) asparagine) is linked at asparagine 576. 6 consecutive transmembrane segments (helical) span residues 632-652 (LLYH…YSLY), 676-696 (TLTL…FLVF), 714-734 (TITS…SNAI), 750-770 (SVFI…IWWV), 787-807 (AHVT…MAAC), and 824-844 (YLYT…LGEI).

The protein belongs to the PIGG/PIGN/PIGO family. PIGG subfamily.

It localises to the endoplasmic reticulum membrane. It participates in glycolipid biosynthesis; glycosylphosphatidylinositol-anchor biosynthesis. Functionally, ethanolamine phosphate transferase involved in glycosylphosphatidylinositol-anchor biosynthesis. Transfers ethanolamine phosphate to the GPI second mannose. The polypeptide is GPI ethanolamine phosphate transferase 2 (las21) (Aspergillus oryzae (strain ATCC 42149 / RIB 40) (Yellow koji mold)).